Reading from the N-terminus, the 139-residue chain is Nucleoside diphosphate kinase (139 aa).

Residues lysine 9, phenylalanine 57, arginine 85, threonine 91, arginine 102, and asparagine 112 each coordinate ATP. Residue histidine 115 is the Pros-phosphohistidine intermediate of the active site.

Belongs to the NDK family. In terms of assembly, homotetramer. Mg(2+) is required as a cofactor.

Its subcellular location is the cytoplasm. It carries out the reaction a 2'-deoxyribonucleoside 5'-diphosphate + ATP = a 2'-deoxyribonucleoside 5'-triphosphate + ADP. The catalysed reaction is a ribonucleoside 5'-diphosphate + ATP = a ribonucleoside 5'-triphosphate + ADP. In terms of biological role, major role in the synthesis of nucleoside triphosphates other than ATP. The ATP gamma phosphate is transferred to the NDP beta phosphate via a ping-pong mechanism, using a phosphorylated active-site intermediate. The chain is Nucleoside diphosphate kinase from Exiguobacterium sp. (strain ATCC BAA-1283 / AT1b).